We begin with the raw amino-acid sequence, 110 residues long: MQNEKGKNWDESRHDAVIIPKMRSKLQKPKLYRVFLFNDDYTPMDFVVFVLKNFFKKSFEEATHIMLNVHQNGVGECGIYSYEVAEMKVIQVRECAHQNEHPLQCVMEWK.

This sequence belongs to the ClpS family. Binds to the N-terminal domain of the chaperone ClpA.

Functionally, involved in the modulation of the specificity of the ClpAP-mediated ATP-dependent protein degradation. The chain is ATP-dependent Clp protease adapter protein ClpS from Bartonella quintana (strain Toulouse) (Rochalimaea quintana).